We begin with the raw amino-acid sequence, 299 residues long: uncharacterized protein (299 aa).

Polar residues predominate over residues M1–L10. 3 disordered regions span residues M1–N30, K54–N89, and Q148–V212. The span at N56–N89 shows a compositional bias: low complexity. 2 stretches are compositionally biased toward acidic residues: residues Y150–E169 and E177–V212.

This is an uncharacterized protein from Dictyostelium discoideum (Social amoeba).